The sequence spans 289 residues: Type III pantothenate kinase (289 aa).

Aspartate 9–lysine 16 contributes to the ATP binding site. Substrate contacts are provided by residues tyrosine 106 and glycine 113–arginine 116. The active-site Proton acceptor is the aspartate 115. Threonine 139 is a binding site for ATP. Threonine 209 is a substrate binding site.

Belongs to the type III pantothenate kinase family. In terms of assembly, homodimer. NH4(+) serves as cofactor. K(+) is required as a cofactor.

It localises to the cytoplasm. It carries out the reaction (R)-pantothenate + ATP = (R)-4'-phosphopantothenate + ADP + H(+). It participates in cofactor biosynthesis; coenzyme A biosynthesis; CoA from (R)-pantothenate: step 1/5. Functionally, catalyzes the phosphorylation of pantothenate (Pan), the first step in CoA biosynthesis. This chain is Type III pantothenate kinase, found in Paraburkholderia phymatum (strain DSM 17167 / CIP 108236 / LMG 21445 / STM815) (Burkholderia phymatum).